Reading from the N-terminus, the 447-residue chain is Signal recognition particle 54 kDa protein (447 aa).

Residues 103-110 (GVQGSGKT), 185-189 (DTAGR), and 245-248 (TKMD) each bind GTP.

The protein belongs to the GTP-binding SRP family. SRP54 subfamily. As to quaternary structure, part of the signal recognition particle protein translocation system, which is composed of SRP and FtsY. Archaeal SRP consists of a 7S RNA molecule of 300 nucleotides and two protein subunits: SRP54 and SRP19.

The protein resides in the cytoplasm. It catalyses the reaction GTP + H2O = GDP + phosphate + H(+). In terms of biological role, involved in targeting and insertion of nascent membrane proteins into the cytoplasmic membrane. Binds to the hydrophobic signal sequence of the ribosome-nascent chain (RNC) as it emerges from the ribosomes. The SRP-RNC complex is then targeted to the cytoplasmic membrane where it interacts with the SRP receptor FtsY. This Saccharolobus islandicus (strain L.S.2.15 / Lassen #1) (Sulfolobus islandicus) protein is Signal recognition particle 54 kDa protein.